We begin with the raw amino-acid sequence, 360 residues long: Sensor histidine kinase LiaS (360 aa).

The Cytoplasmic segment spans residues 1-15 (MRKKMLASLQWRAIR). A helical transmembrane segment spans residues 16-36 (MTTGISLLLFVCLISFMMFYY). Topologically, residues 37–47 (RLDPLVLLSSS) are extracellular. A helical membrane pass occupies residues 48–68 (WFGIPFILILLLISVTVGFAS). Residues 69 to 360 (GYMYGNRLKT…ENERDSSIID (292 aa)) lie on the Cytoplasmic side of the membrane. One can recognise an HAMP domain in the interval 74-126 (NRLKTRIDTLIESILTFENGNFAYRIPPLGDDEIGLAADQLNEMAKRVELQVA). The 194-residue stretch at 153 to 346 (RLARDLHDAV…QIEVKVPIFP (194 aa)) folds into the Histidine kinase domain. His-159 bears the Phosphohistidine; by autocatalysis mark.

It is found in the cell membrane. It catalyses the reaction ATP + protein L-histidine = ADP + protein N-phospho-L-histidine.. Its function is as follows. Member of the two-component regulatory system LiaS/LiaR probably involved in response to a subset of cell wall-active antibiotics that interfere with the lipid II cycle in the cytoplasmic membrane (bacitracin, nisin, ramoplanin and vancomycin). Also seems to be involved in response to cationic antimicrobial peptides and secretion stress. Activates probably LiaR by phosphorylation. This chain is Sensor histidine kinase LiaS (liaS), found in Bacillus subtilis (strain 168).